A 264-amino-acid polypeptide reads, in one-letter code: MYVTKYKNKLPTLQVDLIIMPHQTQACIYKQTLSLHQIFQQRKATKTLHTKKTMMSKKKESIGRQKIPMVKIKKESHRQVTFSKRRAGLFKKASELCTLCGAEIGIIVFSPAKKPFSFGHPSVESVLDRYVSRNNMSLAQSQQLQGSPAASCELNMQLTHILSEVEEEKKKGQAMEEMRKESVRRSMINWWEKPVEEMNMVQLQEMKYALEELRKTVVTNMASFNEAKDDVFGFLDNKVTVPPYVNMPSGPSNIYNFANGNGCF.

One can recognise an MADS-box domain in the interval 62-122 (IGRQKIPMVK…KKPFSFGHPS (61 aa)).

Interacts with PHE1/AGL37, PHE2/AGL38, AGL80 and AGL86. Forms a heterodimer with AGL80. Expressed exclusively in the central cell of the female gametophyte and in early endosperm.

It localises to the nucleus. In terms of biological role, probable transcription factor. Controls central cell differentiation during female gametophyte development. The sequence is that of Agamous-like MADS-box protein AGL61 (AGL61) from Arabidopsis thaliana (Mouse-ear cress).